The primary structure comprises 302 residues: Uricase (302 aa).

Active-site charge relay system residues include Lys-22 and Thr-67. Thr-67, Asp-68, Phe-163, Arg-180, Gln-223, and Asn-249 together coordinate urate. His-251 serves as the catalytic Charge relay system.

It belongs to the uricase family. As to quaternary structure, homotetramer.

The enzyme catalyses urate + O2 + H2O = 5-hydroxyisourate + H2O2. It participates in purine metabolism; urate degradation; (S)-allantoin from urate: step 1/3. In terms of biological role, catalyzes the oxidation of uric acid to 5-hydroxyisourate, which is further processed to form (S)-allantoin. This chain is Uricase (uox), found in Arthrobacter globiformis.